Reading from the N-terminus, the 483-residue chain is Rhamnulokinase (483 aa).

11-15 (ASSGR) is a binding site for ATP. Substrate contacts are provided by residues glycine 79 and 234 to 236 (HDT). The active-site Proton acceptor is the aspartate 235. Threonine 257 contacts ATP. Residue asparagine 294 participates in substrate binding. Position 302 (glutamine 302) interacts with ATP. Residues cysteine 352 and cysteine 369 are joined by a disulfide bond. Glycine 401 provides a ligand contact to ATP.

Belongs to the rhamnulokinase family. Requires Mg(2+) as cofactor.

The enzyme catalyses L-rhamnulose + ATP = L-rhamnulose 1-phosphate + ADP + H(+). It participates in carbohydrate degradation; L-rhamnose degradation; glycerone phosphate from L-rhamnose: step 2/3. Involved in the catabolism of L-rhamnose (6-deoxy-L-mannose). Catalyzes the transfer of the gamma-phosphate group from ATP to the 1-hydroxyl group of L-rhamnulose to yield L-rhamnulose 1-phosphate. In Listeria monocytogenes serotype 4b (strain F2365), this protein is Rhamnulokinase.